We begin with the raw amino-acid sequence, 403 residues long: Chromatin structure-remodeling complex subunit SFH1 (403 aa).

Residues 58 to 115 form a disordered region; sequence FPTFDIDSDSNDEEQSSASAGNDDPQANANGGEAAGVNGQGSGDGGSANTGAGRHGKS. Residues 63–72 show a composition bias toward acidic residues; it reads IDSDSNDEEQ. Positions 84 to 94 are enriched in low complexity; sequence ANANGGEAAGV. A compositionally biased stretch (gly residues) spans 95-105; the sequence is NGQGSGDGGSA.

The protein belongs to the SNF5 family.

The protein localises to the nucleus. In terms of biological role, part of the chromatin structure-remodeling complex (RSC) which is involved in transcription regulation and nucleosome positioning. RSC is responsible for the transfer of a histone octamer from a nucleosome core particle to naked DNA. The reaction requires ATP and involves an activated RSC-nucleosome intermediate. Remodeling reaction also involves DNA translocation, DNA twist and conformational change. As a reconfigurer of centromeric and flanking nucleosomes, RSC complex is required both for proper kinetochore function in chromosome segregation and, via a PKC1-dependent signaling pathway, for organization of the cellular cytoskeleton. This subunit is essential for mitotic growth and required for cell cycle progression. The sequence is that of Chromatin structure-remodeling complex subunit SFH1 (SFH1) from Candida glabrata (strain ATCC 2001 / BCRC 20586 / JCM 3761 / NBRC 0622 / NRRL Y-65 / CBS 138) (Yeast).